We begin with the raw amino-acid sequence, 89 residues long: MVMDVDQKKSIIDVHAKHEGDTGSPEVQVALLTARIEQLTGHFKTHKKDFHSRTGLLKMVGQRRKLLKYLKAKDVQRYRALIEKLGLRK.

The protein belongs to the universal ribosomal protein uS15 family. As to quaternary structure, part of the 30S ribosomal subunit. Forms a bridge to the 50S subunit in the 70S ribosome, contacting the 23S rRNA.

Its function is as follows. One of the primary rRNA binding proteins, it binds directly to 16S rRNA where it helps nucleate assembly of the platform of the 30S subunit by binding and bridging several RNA helices of the 16S rRNA. Functionally, forms an intersubunit bridge (bridge B4) with the 23S rRNA of the 50S subunit in the ribosome. The chain is Small ribosomal subunit protein uS15 from Nitratidesulfovibrio vulgaris (strain DSM 19637 / Miyazaki F) (Desulfovibrio vulgaris).